Here is a 202-residue protein sequence, read N- to C-terminus: UPF0301 protein ML0028 (202 aa).

The protein belongs to the UPF0301 (AlgH) family.

In Mycobacterium leprae (strain TN), this protein is UPF0301 protein ML0028.